The sequence spans 972 residues: Hyaluronan synthase (972 aa).

The segment at 152–325 (KPEHQHVGLS…VSLDWRLEQF (174 aa)) is A1. The tract at residues 432–604 (EDSHINRVPL…IRAWHLTDGF (173 aa)) is A2.

It belongs to the glycosyltransferase 2 family. CS/HAS subfamily. Mg(2+) is required as a cofactor. It depends on Co(2+) as a cofactor.

Its subcellular location is the cell membrane. The catalysed reaction is [hyaluronan](n) + UDP-N-acetyl-alpha-D-glucosamine = N-acetyl-beta-D-glucosaminyl-(1-&gt;4)-[hyaluronan](n) + UDP + H(+). It carries out the reaction N-acetyl-beta-D-glucosaminyl-(1-&gt;4)-[hyaluronan](n) + UDP-alpha-D-glucuronate = [hyaluronan](n+1) + UDP + H(+). The enzyme catalyses 3-O-(beta-D-GalNAc-(1-&gt;4)-beta-D-GlcA-(1-&gt;3)-beta-D-Gal-(1-&gt;3)-beta-D-Gal-(1-&gt;4)-beta-D-Xyl)-L-seryl-[protein] + UDP-alpha-D-glucuronate = 3-O-(beta-D-GlcA-(1-&gt;3)-beta-D-GalNAc-(1-&gt;4)-beta-D-GlcA-(1-&gt;3)-beta-D-Gal-(1-&gt;3)-beta-D-Gal-(1-&gt;4)-beta-D-Xyl)-L-seryl-[protein] + UDP + H(+). It catalyses the reaction 3-O-{[beta-D-GalNAc-(1-&gt;4)-beta-D-GlcA-(1-&gt;3)](n)-beta-D-GalNAc-(1-&gt;4)-beta-D-GlcA-(1-&gt;3)-beta-D-Gal-(1-&gt;3)-beta-D-Gal-(1-&gt;4)-beta-D-Xyl}-L-seryl-[protein] + UDP-alpha-D-glucuronate = 3-O-{beta-D-GlcA-(1-&gt;3)-[beta-D-GalNAc-(1-&gt;4)-beta-D-GlcA-(1-&gt;3)](n)-beta-D-GalNAc-(1-&gt;4)-beta-D-GlcA-(1-&gt;3)-beta-D-Gal-(1-&gt;3)-beta-D-Gal-(1-&gt;4)-beta-D-Xyl}-L-seryl-[protein] + UDP + H(+). In terms of biological role, catalyzes the polymerization of hyaluronan, a polysaccharide composed of a repeating disaccharide of N-acetylglucosamine (GlcNAc) and glucuronic acid (GlcUA) units. Each unit has the composition in beta-(1-&gt;4)-GlcUA-beta-(1-&gt;3)-GlcNAc. The sequence is that of Hyaluronan synthase (hyaD) from Pasteurella multocida.